A 324-amino-acid chain; its full sequence is IDS-like terpene synthase 3 (324 aa).

Aspartate 77 and aspartate 81 together coordinate Mg(2+).

Belongs to the FPP/GGPP synthase family. Mg(2+) is required as a cofactor.

It catalyses the reaction (2E)-geranyl diphosphate + H2O = linalool + diphosphate. The catalysed reaction is (2E,6E)-farnesyl diphosphate + H2O = (6E)-nerolidol + diphosphate. Its function is as follows. Terpene synthase that shows monoterpene synthase activity and produces linalool, using geranyl diphosphate (GPP) as substrate. Also shows sesquiterpene synthase activity as it is able to convert farnesyl diphosphate (FPP) into (E)-nerolidol. The polypeptide is IDS-like terpene synthase 3 (Melampsora lini (Rust fungus)).